A 746-amino-acid polypeptide reads, in one-letter code: Protein zyg-11 homolog (746 aa).

3 LRR repeats span residues 185–209, 216–241, and 265–289; these read LPRL…GLRS, MHQL…VLQH, and LPQL…AFVE.

It belongs to the zyg-11 family.

Its function is as follows. Serves as substrate adapter subunit in an E3 ubiquitin ligase complex zyg11-cul2-elongin BC. Targets substrates bearing N-terminal glycine degrons for proteasomal degradation. This is Protein zyg-11 homolog (zyg11) from Danio rerio (Zebrafish).